We begin with the raw amino-acid sequence, 298 residues long: Dihydrodipicolinate reductase-like protein CRR1, chloroplastic (298 aa).

Residues 1 to 25 (MAAVNCHFFQLSRHLKPSRPSFSCS) constitute a chloroplast transit peptide. NAD(+) is bound at residue 160-163 (APTL).

Belongs to the DapB family. In terms of tissue distribution, expressed specifically in leaves.

Its subcellular location is the plastid. The protein resides in the chloroplast stroma. Functionally, dihydrodipicolinate reductase (DHPR)-like protein that may not function as DHPR in lysine biosynthesis. Required for both formation and activity of the chloroplast NAD(P)H dehydrogenase (NDH) complex of the photosynthetic electron transport chain. May function in assembly or stabilization of the NDH complex. The sequence is that of Dihydrodipicolinate reductase-like protein CRR1, chloroplastic from Arabidopsis thaliana (Mouse-ear cress).